A 167-amino-acid chain; its full sequence is MNLPAKTFVILCILFLLDLCFSYIRHEWHSQNALQDMPVPSDLHPIVKQNADALKAAAANKGIDVVITEGFRSFKEQDELYKQGRTKKGNIVTYARGGESYHNYGLAIDFALQKKDGSIIWDMEYDGNQNGKSDWLEVVEIAKTLGFEWGGDWKRFKDYPHLEMIPN.

Positions 1 to 26 (MNLPAKTFVILCILFLLDLCFSYIRH) are cleaved as a signal peptide.

The protein belongs to the peptidase M15C family.

The protein localises to the cell membrane. Functionally, cleaves the linkage of the L-alanine-D-glutamic acid of B.subtilis cell wall. The chain is Peptidoglycan L-alanyl-D-glutamate endopeptidase CwlK (cwlK) from Bacillus subtilis (strain 168).